The chain runs to 536 residues: uncharacterized protein (536 aa).

The Cytoplasmic portion of the chain corresponds to 1–8; sequence MVSIKRYE. The helical transmembrane segment at 9–29 threads the bilayer; the sequence is IISFVIAAFFFLSGLSMWIAF. At 30–502 the chain is on the extracellular side; sequence WPIFNSELRS…VWLGVIIVPR (473 aa). Asn73, Asn236, Asn363, and Asn376 each carry an N-linked (GlcNAc...) asparagine glycan. Residues 503–523 form a helical membrane-spanning segment; the sequence is IIEYLKFVLIFISICILTTLL. Topologically, residues 524 to 536 are cytoplasmic; sequence VIRVRVKGTVSVV.

The protein belongs to the CD36 family.

The protein resides in the membrane. This is an uncharacterized protein from Caenorhabditis elegans.